The sequence spans 276 residues: Putative aliphatic sulfonates transport permease protein SsuC (276 aa).

The next 7 helical transmembrane spans lie at 32–52, 54–74, 87–107, 119–141, 146–168, 199–219, and 242–262; these read GLLLPAVIIAIWQVIGGLGVV, ATVLPTPVTIVLTFKELILSG, AALGFLLGAGLGLMIGILAGF, LQMLRTVPHLAVTPLFILWFGFD, ILLIALGAFFPVYINTFNGIRGV, ILLGIRLSLGIAWLGLVVAEL, and VFAGIIIFAVVGKLTDSFVRL. The region spanning 80–260 is the ABC transmembrane type-1 domain; it reads LQISIYRAAL…VVGKLTDSFV (181 aa).

Belongs to the binding-protein-dependent transport system permease family. CysTW subfamily.

The protein resides in the cell membrane. Functionally, part of a binding-protein-dependent transport system for aliphatic sulfonates. Probably responsible for the translocation of the substrate across the membrane. In Bacillus subtilis (strain 168), this protein is Putative aliphatic sulfonates transport permease protein SsuC (ssuC).